The following is a 709-amino-acid chain: MGLNLLPIEMDDIRKRLDREPNEIEWRVIDAVWSEHCSYKSSKIFLKSFSIDSPNVIMGIKDWQDAGAVDIGDGWAIVIKVESHNHPSAIDPFNGAATGVGGIIRDIISKGAKPIALMDMIRVGNLKIRKNVWLLKNIIAGIAAYGNSIGVPVVGGELSFDDTYNDNPLVDVAAIGIVRKDKIKPSIVDKAGLKLVLAGLTGIDGLGGASFASRKLSGEDEIGAVQIADPFAGKIILDITLEIADKVEAIKDLGGGGLAVAVTEMANGLGAIVDIEKIPLRVKNMNPADVIISETQERMLYAVEEKNVEEVCKAFEEYEYPCSVIGEITSEPIIKFRYFGKDLVSLPTNALLEPPKFLWPIKNVRKNVEEKNVDLPLESTIYTVLSHPDLVSKEWVYSQFDYEVNTSTVVKPGDANGAVVSLPNGKLLAIKADGNPDLCSEDAYECGKGIVAEAYRNLATVGARGMVAVDHLQFGDPKKPEVYYTFVEAIRGIGEATRFFNIPIVGGKVSFYNENSQGKPIKPTPLIVMAGLVQGKLLKNRVEDSSYVVLLGYTRKELGGSLLSKIFKVPSQAPKVRLQEDLLSSEVVIDAINEEKITFAKDISRGGLAASLFNIIVHGYGVEISTKSILSDTDNVVENLFSESSGRFVILTNEPEWIVEKSRSKGIVASIIGKVNKKTSILTIDNTDYDLKTIVNNYFNFLEEVIGNG.

Histidine 36 is a catalytic residue. 2 residues coordinate ATP: tyrosine 39 and lysine 80. Glutamate 82 provides a ligand contact to Mg(2+). Residues 83–86 (SHNH) and arginine 105 each bind substrate. The active-site Proton acceptor is histidine 84. Aspartate 106 provides a ligand contact to Mg(2+). Glutamine 226 contributes to the substrate binding site. Residue aspartate 252 participates in Mg(2+) binding. Residue 294-296 (ETQ) coordinates substrate. Residues aspartate 470 and glycine 507 each coordinate ATP. Residue serine 510 coordinates substrate.

It belongs to the FGAMS family. As to quaternary structure, monomer. Part of the FGAM synthase complex composed of 1 PurL, 1 PurQ and 2 PurS subunits.

It localises to the cytoplasm. The enzyme catalyses N(2)-formyl-N(1)-(5-phospho-beta-D-ribosyl)glycinamide + L-glutamine + ATP + H2O = 2-formamido-N(1)-(5-O-phospho-beta-D-ribosyl)acetamidine + L-glutamate + ADP + phosphate + H(+). The protein operates within purine metabolism; IMP biosynthesis via de novo pathway; 5-amino-1-(5-phospho-D-ribosyl)imidazole from N(2)-formyl-N(1)-(5-phospho-D-ribosyl)glycinamide: step 1/2. In terms of biological role, part of the phosphoribosylformylglycinamidine synthase complex involved in the purines biosynthetic pathway. Catalyzes the ATP-dependent conversion of formylglycinamide ribonucleotide (FGAR) and glutamine to yield formylglycinamidine ribonucleotide (FGAM) and glutamate. The FGAM synthase complex is composed of three subunits. PurQ produces an ammonia molecule by converting glutamine to glutamate. PurL transfers the ammonia molecule to FGAR to form FGAM in an ATP-dependent manner. PurS interacts with PurQ and PurL and is thought to assist in the transfer of the ammonia molecule from PurQ to PurL. The polypeptide is Phosphoribosylformylglycinamidine synthase subunit PurL (Saccharolobus islandicus (strain M.16.4 / Kamchatka #3) (Sulfolobus islandicus)).